The following is a 140-amino-acid chain: uncharacterized protein (140 aa).

The C2H2-type zinc finger occupies 21–42 (CPYCNYTNADVKAIKKHIKSKH).

This sequence to M.jannaschii MJECL27.

This is an uncharacterized protein from Methanocaldococcus jannaschii (strain ATCC 43067 / DSM 2661 / JAL-1 / JCM 10045 / NBRC 100440) (Methanococcus jannaschii).